The primary structure comprises 332 residues: L-lactate dehydrogenase A chain (332 aa).

NAD(+) is bound by residues Gly29–Lys57 and Arg99. Positions 106, 138, and 169 each coordinate substrate. Asn138 contacts NAD(+). Catalysis depends on His193, which acts as the Proton acceptor. Thr248 contacts substrate.

This sequence belongs to the LDH/MDH superfamily. LDH family. In terms of assembly, homotetramer.

The protein localises to the cytoplasm. The enzyme catalyses (S)-lactate + NAD(+) = pyruvate + NADH + H(+). It functions in the pathway fermentation; pyruvate fermentation to lactate; (S)-lactate from pyruvate: step 1/1. Functionally, interconverts simultaneously and stereospecifically pyruvate and lactate with concomitant interconversion of NADH and NAD(+). The polypeptide is L-lactate dehydrogenase A chain (ldha) (Rhinogobiops nicholsii (Blackeye goby)).